The chain runs to 196 residues: dITP/XTP pyrophosphatase (196 aa).

8 to 13 provides a ligand contact to substrate; that stretch reads TKNEGK. Residues E41 and D70 each coordinate Mg(2+). The active-site Proton acceptor is the D70. Substrate contacts are provided by residues S71, 153–156, K176, and 181–182; these read FGYD and HR.

It belongs to the HAM1 NTPase family. In terms of assembly, homodimer. Mg(2+) serves as cofactor.

It catalyses the reaction XTP + H2O = XMP + diphosphate + H(+). It carries out the reaction dITP + H2O = dIMP + diphosphate + H(+). The enzyme catalyses ITP + H2O = IMP + diphosphate + H(+). Pyrophosphatase that catalyzes the hydrolysis of nucleoside triphosphates to their monophosphate derivatives, with a high preference for the non-canonical purine nucleotides XTP (xanthosine triphosphate), dITP (deoxyinosine triphosphate) and ITP. Seems to function as a house-cleaning enzyme that removes non-canonical purine nucleotides from the nucleotide pool, thus preventing their incorporation into DNA/RNA and avoiding chromosomal lesions. The protein is dITP/XTP pyrophosphatase of Bacillus licheniformis (strain ATCC 14580 / DSM 13 / JCM 2505 / CCUG 7422 / NBRC 12200 / NCIMB 9375 / NCTC 10341 / NRRL NRS-1264 / Gibson 46).